The chain runs to 601 residues: RNA polymerase II C-terminal domain phosphatase-like 5 (601 aa).

The tract at residues 1–20 (MFVAKNLSPERESKRQKKEP) is disordered. A compositionally biased stretch (basic and acidic residues) spans 8-20 (SPERESKRQKKEP). FCP1 homology domains are found at residues 84-259 (LNMK…TDES) and 381-553 (LNEK…DESE).

In terms of tissue distribution, expressed in roots, seedlings, hypocotyls, cotyledons, leaves, siliques and flowers.

It localises to the nucleus. It catalyses the reaction O-phospho-L-seryl-[protein] + H2O = L-seryl-[protein] + phosphate. The enzyme catalyses O-phospho-L-threonyl-[protein] + H2O = L-threonyl-[protein] + phosphate. In terms of biological role, mediates the dephosphorylation of 'Ser-2' of the heptad repeats YSPTSPS in the C-terminal domain of the largest RNA polymerase II subunit (RPB1). This promotes the activity of RNA polymerase II. Positively regulates abscisic acid (ABA) and drought responses, including the regulation of specific genes expression. The protein is RNA polymerase II C-terminal domain phosphatase-like 5 of Arabidopsis thaliana (Mouse-ear cress).